A 668-amino-acid polypeptide reads, in one-letter code: Threonine--tRNA ligase (668 aa).

Positions 1-64 constitute a TGS domain; that stretch reads MSQAISLTFP…TDGKIEIITR (64 aa). The segment at 245–553 is catalytic; that stretch reads DHRKLGREMD…LIENFAGHMP (309 aa). Zn(2+)-binding residues include Cys347, His398, and His530.

The protein belongs to the class-II aminoacyl-tRNA synthetase family. Homodimer. Zn(2+) is required as a cofactor.

It localises to the cytoplasm. The catalysed reaction is tRNA(Thr) + L-threonine + ATP = L-threonyl-tRNA(Thr) + AMP + diphosphate + H(+). Functionally, catalyzes the attachment of threonine to tRNA(Thr) in a two-step reaction: L-threonine is first activated by ATP to form Thr-AMP and then transferred to the acceptor end of tRNA(Thr). Also edits incorrectly charged L-seryl-tRNA(Thr). This Rhizobium etli (strain CIAT 652) protein is Threonine--tRNA ligase.